The primary structure comprises 418 residues: Gamma-glutamyl phosphate reductase (418 aa).

Belongs to the gamma-glutamyl phosphate reductase family.

It localises to the cytoplasm. The catalysed reaction is L-glutamate 5-semialdehyde + phosphate + NADP(+) = L-glutamyl 5-phosphate + NADPH + H(+). Its pathway is amino-acid biosynthesis; L-proline biosynthesis; L-glutamate 5-semialdehyde from L-glutamate: step 2/2. In terms of biological role, catalyzes the NADPH-dependent reduction of L-glutamate 5-phosphate into L-glutamate 5-semialdehyde and phosphate. The product spontaneously undergoes cyclization to form 1-pyrroline-5-carboxylate. In Pelodictyon phaeoclathratiforme (strain DSM 5477 / BU-1), this protein is Gamma-glutamyl phosphate reductase.